A 161-amino-acid chain; its full sequence is Dermonecrotic toxin LarSicTox-alphaI-1 (161 aa).

This sequence belongs to the arthropod phospholipase D family. Class II subfamily. Mg(2+) is required as a cofactor. Post-translationally, contains 2 disulfide bonds. In terms of tissue distribution, expressed by the venom gland.

The protein localises to the secreted. The catalysed reaction is an N-(acyl)-sphingosylphosphocholine = an N-(acyl)-sphingosyl-1,3-cyclic phosphate + choline. It catalyses the reaction an N-(acyl)-sphingosylphosphoethanolamine = an N-(acyl)-sphingosyl-1,3-cyclic phosphate + ethanolamine. The enzyme catalyses a 1-acyl-sn-glycero-3-phosphocholine = a 1-acyl-sn-glycero-2,3-cyclic phosphate + choline. It carries out the reaction a 1-acyl-sn-glycero-3-phosphoethanolamine = a 1-acyl-sn-glycero-2,3-cyclic phosphate + ethanolamine. Dermonecrotic toxins cleave the phosphodiester linkage between the phosphate and headgroup of certain phospholipids (sphingolipid and lysolipid substrates), forming an alcohol (often choline) and a cyclic phosphate. This toxin acts on sphingomyelin (SM). It may also act on ceramide phosphoethanolamine (CPE), lysophosphatidylcholine (LPC) and lysophosphatidylethanolamine (LPE), but not on lysophosphatidylserine (LPS), and lysophosphatidylglycerol (LPG). It acts by transphosphatidylation, releasing exclusively cyclic phosphate products as second products. Induces dermonecrosis, hemolysis, increased vascular permeability, edema, inflammatory response, and platelet aggregation. The polypeptide is Dermonecrotic toxin LarSicTox-alphaI-1 (Loxosceles arizonica (Arizona brown spider)).